Reading from the N-terminus, the 311-residue chain is MQQDPSISSKQKSTAVIKMVISMVIFGSIGFFSEHTNLPSFELVFVRCLCATLFLGFCWLASGQYKTEKWSKRDVLQTLACGFFLVFNWVFLFKSFEETSVTIAISVYHLAPVLVLLLGSFFYREKLNVISVSSIIICFLGTALISGINGSTSLTQLMGSGIIWAVLAALFYAFTTLLGKGIHNLSPYTTTFLQTGLGVIILIPFIHFGAFADLSQGNWIMVVSTGIIHTGIVYLLFFDSLRFLSTKFISIIVFLDPAVAIVLDTVFTGFRPDLYQTLGIVMIFAGMALTLVRRQGKANVTAEGTDIEQIQ.

Helical transmembrane passes span 13 to 33, 41 to 61, 76 to 96, 103 to 123, 128 to 148, 157 to 177, 192 to 212, 218 to 238, 248 to 268, and 272 to 292; these read STAV…GFFS, FELV…CWLA, LQTL…FKSF, IAIS…SFFY, NVIS…ISGI, LMGS…FTTL, FLQT…GAFA, NWIM…LLFF, FISI…TVFT, and PDLY…LTLV. EamA domains follow at residues 24 to 147 and 166 to 292; these read VIFG…LISG and VLAA…LTLV.

The protein belongs to the EamA transporter family.

The protein resides in the cell membrane. This is an uncharacterized protein from Bacillus subtilis (strain 168).